The primary structure comprises 101 residues: UPF0751 protein DSY3086 (101 aa).

This sequence belongs to the UPF0751 family.

The sequence is that of UPF0751 protein DSY3086 from Desulfitobacterium hafniense (strain Y51).